Reading from the N-terminus, the 332-residue chain is Phosphate acyltransferase (332 aa).

The protein belongs to the PlsX family. As to quaternary structure, homodimer. Probably interacts with PlsY.

It is found in the cytoplasm. It carries out the reaction a fatty acyl-[ACP] + phosphate = an acyl phosphate + holo-[ACP]. The protein operates within lipid metabolism; phospholipid metabolism. Catalyzes the reversible formation of acyl-phosphate (acyl-PO(4)) from acyl-[acyl-carrier-protein] (acyl-ACP). This enzyme utilizes acyl-ACP as fatty acyl donor, but not acyl-CoA. This is Phosphate acyltransferase from Clostridium novyi (strain NT).